Here is a 521-residue protein sequence, read N- to C-terminus: Lipid-translocating exporter-like protein RTA1 (521 aa).

7 helical membrane passes run glycine 186–cysteine 206, alanine 211–leucine 231, leucine 249–alanine 269, valine 292–serine 312, leucine 332–phenylalanine 352, threonine 371–valine 391, and glutamate 418–valine 438. The tract at residues threonine 493–threonine 521 is disordered.

The protein belongs to the lipid-translocating exporter (LTE) (TC 9.A.26.1) family.

The protein localises to the membrane. Lipid-translocating exporter-like protein; part of the gene cluster that mediates the biosynthesis of phomenoic acid, a long chain aliphatic carboxylic acid that does not appear to be essential for pathogenicity but may play a role in allowing to outcompete other fungi in the environmental niche via its antifungal properties. The protein is Lipid-translocating exporter-like protein RTA1 of Leptosphaeria maculans (strain JN3 / isolate v23.1.3 / race Av1-4-5-6-7-8) (Blackleg fungus).